The sequence spans 2701 residues: Centromere-associated protein E (2701 aa).

Positions 6–329 (AVAVCVRVRP…LQFASTAKYM (324 aa)) constitute a Kinesin motor domain. 86–93 (GQTASGKT) is a binding site for ATP. Residues 336 to 2590 (NEVSTDEALL…SNEVKTWKER (2255 aa)) adopt a coiled-coil conformation. Phosphoserine is present on residues serine 611 and serine 2083. Residues 2126–2476 (KEIEFQKELS…IDLEKMKNAK (351 aa)) form a kinetochore-binding domain region. A disordered region spans residues 2355–2376 (SGAQVNPTTQDNKNPHVTSRAT). The residue at position 2389 (serine 2389) is a Phosphoserine. A compositionally biased stretch (polar residues) spans 2508 to 2527 (QAQDTSVISEHTDPQPSNKP). Disordered stretches follow at residues 2508–2533 (QAQD…CGGG) and 2588–2701 (KERT…CKTQ). The tract at residues 2510–2698 (QDTSVISEHT…ASSGKDVPEC (189 aa)) is globular autoinhibitory domain. The segment covering 2588–2600 (KERTLKREAHKQV) has biased composition (basic and acidic residues). Residues 2601-2625 (TCENSPKSPKVTGTASKKKQITPSQ) show a composition bias toward polar residues. Residues 2626-2640 (CKERNLQDPVPKESP) show a composition bias toward basic and acidic residues. 3 positions are modified to phosphoserine: serine 2639, serine 2647, and serine 2651. Residue cysteine 2698 is modified to Cysteine methyl ester. Residue cysteine 2698 is the site of S-farnesyl cysteine attachment. Positions 2699-2701 (KTQ) are cleaved as a propeptide — removed in mature form.

It belongs to the TRAFAC class myosin-kinesin ATPase superfamily. Kinesin family. As to quaternary structure, monomer. Interacts with CENPF. Interacts with BUB1B. Interacts with SEPT7. Interacts with KIF18A. Interacts with PRC1. Interacts with NUF2; this interaction determines kinetochore localization. Interacts with SKAP; this interaction greatly favors SKAP binding to microtubules. Interacts with TRAPPC12. Interacts with CTCF. Post-translationally, the C-terminal inhibitory domain is phosphorylated. Phosphorylation relieves autoinhibition of the kinetochore motor. Sumoylated with SUMO2 and SUMO3. The sumoylation mediates the association to the kinetochore.

It localises to the chromosome. The protein localises to the centromere. It is found in the kinetochore. The protein resides in the cytoplasm. Its subcellular location is the cytoskeleton. It localises to the spindle. Microtubule plus-end-directed kinetochore motor which plays an important role in chromosome congression, microtubule-kinetochore conjugation and spindle assembly checkpoint activation. Drives chromosome congression (alignment of chromosomes at the spindle equator resulting in the formation of the metaphase plate) by mediating the lateral sliding of polar chromosomes along spindle microtubules towards the spindle equator and by aiding the establishment and maintenance of connections between kinetochores and spindle microtubules. The transport of pole-proximal chromosomes towards the spindle equator is favored by microtubule tracks that are detyrosinated. Acts as a processive bi-directional tracker of dynamic microtubule tips; after chromosomes have congressed, continues to play an active role at kinetochores, enhancing their links with dynamic microtubule ends. Suppresses chromosome congression in NDC80-depleted cells and contributes positively to congression only when microtubules are stabilized. Plays an important role in the formation of stable attachments between kinetochores and spindle microtubules The stabilization of kinetochore-microtubule attachment also requires CENPE-dependent localization of other proteins to the kinetochore including BUB1B, MAD1 and MAD2. Plays a role in spindle assembly checkpoint activation (SAC) via its interaction with BUB1B resulting in the activation of its kinase activity, which is important for activating SAC. Necessary for the mitotic checkpoint signal at individual kinetochores to prevent aneuploidy due to single chromosome loss. This chain is Centromere-associated protein E (CENPE), found in Homo sapiens (Human).